Here is a 137-residue protein sequence, read N- to C-terminus: Methylmalonyl-CoA decarboxylase subunit delta (137 aa).

The chain crosses the membrane as a helical span at residues 30–50 (VTVVLGMGITVVALIFLMYII).

This sequence belongs to the OadG family. As to quaternary structure, the methylmalonyl-CoA decarboxylase is composed of four subunits: the carboxyltransferase alpha subunit (MmdA), the tunnel beta subunit (MmdB), the biotin-containing gamma subunit (MmdC) and the delta subunit (MmdD).

The protein resides in the cell membrane. The enzyme catalyses (S)-methylmalonyl-CoA + Na(+)(in) + H(+)(out) = propanoyl-CoA + Na(+)(out) + CO2. Subunit of the sodium ion pump methylmalonyl-CoA decarboxylase, which converts the chemical energy of a decarboxylation reaction into an electrochemical gradient of Na(+) ions across the cytoplasmic membrane, thereby creating a sodium ion motive force that is used for ATP synthesis. The delta subunit is required for catalytic activity as well as for the proper assembly of the individual subunits to an enzyme complex. This chain is Methylmalonyl-CoA decarboxylase subunit delta, found in Propionigenium modestum.